A 143-amino-acid polypeptide reads, in one-letter code: ATP synthase subunit 9, mitochondrial (143 aa).

A mitochondrion-targeting transit peptide spans 1–62 (MAASRVFAQR…ARQAFAARRQ (62 aa)). 2 helical membrane passes run 85–105 (IGLGGAGIGIGVVFGSLLLAV) and 119–139 (AILGFAFVEAIGLFDLMVAMM).

The protein belongs to the ATPase C chain family. As to quaternary structure, F-type ATPases have 2 components, CF(1) - the catalytic core - and CF(0) - the membrane proton channel. CF(1) has five subunits: alpha(3), beta(3), gamma(1), delta(1), epsilon(1). CF(0) has three main subunits: a, b and c.

The protein resides in the mitochondrion membrane. Functionally, mitochondrial membrane ATP synthase (F(1)F(0) ATP synthase or Complex V) produces ATP from ADP in the presence of a proton gradient across the membrane which is generated by electron transport complexes of the respiratory chain. F-type ATPases consist of two structural domains, F(1) - containing the extramembraneous catalytic core and F(0) - containing the membrane proton channel, linked together by a central stalk and a peripheral stalk. During catalysis, ATP synthesis in the catalytic domain of F(1) is coupled via a rotary mechanism of the central stalk subunits to proton translocation. Part of the complex F(0) domain. A homomeric c-ring of probably 10 subunits is part of the complex rotary element. The protein is ATP synthase subunit 9, mitochondrial (atp9) of Emericella nidulans (strain FGSC A4 / ATCC 38163 / CBS 112.46 / NRRL 194 / M139) (Aspergillus nidulans).